The sequence spans 198 residues: MNSGREPRTPRTLLSIADILAPRMVPRAPSAPQLPESGPGPTSPLCALEELTSKTFRGLDARALQPSEGRAGPDALGPGPFGRKRRKSRTAFTAQQVLELERRFVFQKYLAPSERDGLATRLGLANAQVVTWFQNRRAKLKRDVEEMRADVASLRALSPEVLCSLALPEGAPDPGLCLGPAGPDSRPHLSDEEIQVDD.

3 disordered regions span residues 24–46 (MVPR…SPLC), 63–89 (ALQP…RKSR), and 173–198 (DPGL…QVDD). The homeobox DNA-binding region spans 85–144 (RRKSRTAFTAQQVLELERRFVFQKYLAPSERDGLATRLGLANAQVVTWFQNRRAKLKRDV).

It localises to the nucleus. In terms of biological role, transcription factor. The sequence is that of Transcription factor LBX2 (LBX2) from Homo sapiens (Human).